The primary structure comprises 276 residues: 5-deoxy-glucuronate isomerase (276 aa).

The protein belongs to the isomerase IolB family.

The enzyme catalyses 5-deoxy-D-glucuronate = 5-dehydro-2-deoxy-D-gluconate. The protein operates within polyol metabolism; myo-inositol degradation into acetyl-CoA; acetyl-CoA from myo-inositol: step 4/7. Functionally, involved in the isomerization of 5-deoxy-glucuronate (5DG) to 5-dehydro-2-deoxy-D-gluconate (DKG or 2-deoxy-5-keto-D-gluconate). In Geobacillus kaustophilus (strain HTA426), this protein is 5-deoxy-glucuronate isomerase.